A 305-amino-acid polypeptide reads, in one-letter code: Thymidylate synthase (305 aa).

Residues Arg-26 and 160–161 (RR) each bind dUMP. Residue Cys-180 is the Nucleophile of the active site. DUMP contacts are provided by residues 207–210 (RSCD), Asn-218, and 248–250 (HLY). Residue Asp-210 participates in (6R)-5,10-methylene-5,6,7,8-tetrahydrofolate binding. Ala-304 serves as a coordination point for (6R)-5,10-methylene-5,6,7,8-tetrahydrofolate.

The protein belongs to the thymidylate synthase family. Bacterial-type ThyA subfamily. As to quaternary structure, homodimer.

Its subcellular location is the cytoplasm. It carries out the reaction dUMP + (6R)-5,10-methylene-5,6,7,8-tetrahydrofolate = 7,8-dihydrofolate + dTMP. It participates in pyrimidine metabolism; dTTP biosynthesis. In terms of biological role, catalyzes the reductive methylation of 2'-deoxyuridine-5'-monophosphate (dUMP) to 2'-deoxythymidine-5'-monophosphate (dTMP) while utilizing 5,10-methylenetetrahydrofolate (mTHF) as the methyl donor and reductant in the reaction, yielding dihydrofolate (DHF) as a by-product. This enzymatic reaction provides an intracellular de novo source of dTMP, an essential precursor for DNA biosynthesis. This Sinorhizobium fredii (strain NBRC 101917 / NGR234) protein is Thymidylate synthase.